We begin with the raw amino-acid sequence, 201 residues long: Phosphatidylglycerophosphatase and protein-tyrosine phosphatase 1 (201 aa).

A mitochondrion-targeting transit peptide spans 1 to 27 (MAATALLEAGLARVLFYPTLLYTLFRG). Positions 37 to 188 (WYHRIDPTVL…LKEFHKQITA (152 aa)) constitute a Tyrosine-protein phosphatase domain. Cysteine 132 acts as the Phosphocysteine intermediate in catalysis.

The protein belongs to the protein-tyrosine phosphatase family. Non-receptor class dual specificity subfamily. In terms of assembly, interacts with STYXL1; the interaction inhibits PTPMT1 catalytic activity.

Its subcellular location is the mitochondrion inner membrane. It carries out the reaction a 1,2-diacyl-sn-glycero-3-phospho-(1'-sn-glycero-3'-phosphate) + H2O = a 1,2-diacyl-sn-glycero-3-phospho-(1'-sn-glycerol) + phosphate. The catalysed reaction is O-phospho-L-tyrosyl-[protein] + H2O = L-tyrosyl-[protein] + phosphate. The enzyme catalyses O-phospho-L-seryl-[protein] + H2O = L-seryl-[protein] + phosphate. It catalyses the reaction O-phospho-L-threonyl-[protein] + H2O = L-threonyl-[protein] + phosphate. It carries out the reaction 1,2-di-(9Z-octadecenoyl)-sn-glycero-3-phospho-(1'-sn-glycerol-3'-phosphate) + H2O = 1,2-di-(9Z-octadecenoyl)-sn-glycero-3-phospho-(1'-sn-glycerol) + phosphate. The catalysed reaction is 1,2-dioctanoyl-sn-glycero-3-phospho-(1D-myo-inositol-5-phosphate) + H2O = 1,2-dioctanoyl-sn-glycero-3-phospho-(1D-myo-inositol) + phosphate. The enzyme catalyses a 1-acyl-2-hexanoyl-sn-glycero-3-phospho-(1D-myo-inositol-5-phosphate) + H2O = a 1-acyl-2-hexanoyl-sn-glycero-3-phospho-(1D-myo-inositol) + phosphate. It catalyses the reaction 1,2-dibutyryl-sn-glycero-3-phospho-(1D-myo-inositol-5-phosphate) + H2O = 1,2-dibutyryl-sn-glycero-3-phospho-(1D-myo-inositol) + phosphate. It functions in the pathway phospholipid metabolism; phosphatidylglycerol biosynthesis; phosphatidylglycerol from CDP-diacylglycerol: step 2/2. Functionally, lipid phosphatase which dephosphorylates phosphatidylglycerophosphate (PGP) to phosphatidylglycerol (PG). PGP is an essential intermediate in the biosynthetic pathway of cardiolipin, a mitochondrial-specific phospholipid regulating the membrane integrity and activities of the organelle. Has also been shown to display phosphatase activity toward phosphoprotein substrates, specifically mediates dephosphorylation of mitochondrial proteins, thereby playing an essential role in ATP production. Has probably a preference for proteins phosphorylated on Ser and/or Thr residues compared to proteins phosphorylated on Tyr residues. Probably involved in regulation of insulin secretion in pancreatic beta cells. May prevent intrinsic apoptosis, probably by regulating mitochondrial membrane integrity. The polypeptide is Phosphatidylglycerophosphatase and protein-tyrosine phosphatase 1 (Homo sapiens (Human)).